Consider the following 396-residue polypeptide: Phosphoglycerate kinase (396 aa).

Residues 21-23 (DFN), arginine 36, 59-62 (HFDR), arginine 118, and arginine 151 contribute to the substrate site. ATP-binding positions include lysine 201, glutamate 323, and 353–356 (GGDT).

It belongs to the phosphoglycerate kinase family. As to quaternary structure, monomer.

It is found in the cytoplasm. It catalyses the reaction (2R)-3-phosphoglycerate + ATP = (2R)-3-phospho-glyceroyl phosphate + ADP. It participates in carbohydrate degradation; glycolysis; pyruvate from D-glyceraldehyde 3-phosphate: step 2/5. This is Phosphoglycerate kinase from Caulobacter sp. (strain K31).